A 1133-amino-acid polypeptide reads, in one-letter code: Myb-binding protein 1A (1133 aa).

4 disordered regions span residues 1-62 (MKSK…ENTA), 718-764 (PLSK…DAES), 924-943 (GEEH…SRQA), and 1111-1133 (KKVA…EEST). Basic and acidic residues-rich tracts occupy residues 20 to 35 (KAKE…KSEA) and 50 to 60 (EKPAETEEKEN). Acidic residues-rich tracts occupy residues 725–735 (GEEESDDELDK) and 744–762 (DDSE…EDDA).

The protein belongs to the MYBBP1A family. Interacts with nclb.

Its subcellular location is the cytoplasm. The protein resides in the nucleus. The protein localises to the nucleolus. In terms of biological role, has a role in rRNA biogenesis, cell proliferation and tissue growth by contributing to the localization of nclb to the nucleolus. This is Myb-binding protein 1A from Drosophila melanogaster (Fruit fly).